A 481-amino-acid chain; its full sequence is Proline--tRNA ligase (481 aa).

The protein belongs to the class-II aminoacyl-tRNA synthetase family. ProS type 3 subfamily. In terms of assembly, homodimer.

The protein localises to the cytoplasm. The catalysed reaction is tRNA(Pro) + L-proline + ATP = L-prolyl-tRNA(Pro) + AMP + diphosphate. Its function is as follows. Catalyzes the attachment of proline to tRNA(Pro) in a two-step reaction: proline is first activated by ATP to form Pro-AMP and then transferred to the acceptor end of tRNA(Pro). In Prosthecochloris aestuarii (strain DSM 271 / SK 413), this protein is Proline--tRNA ligase.